The following is a 202-amino-acid chain: N-(5'-phosphoribosyl)anthranilate isomerase (202 aa).

It belongs to the TrpF family.

It carries out the reaction N-(5-phospho-beta-D-ribosyl)anthranilate = 1-(2-carboxyphenylamino)-1-deoxy-D-ribulose 5-phosphate. The protein operates within amino-acid biosynthesis; L-tryptophan biosynthesis; L-tryptophan from chorismate: step 3/5. The sequence is that of N-(5'-phosphoribosyl)anthranilate isomerase from Listeria welshimeri serovar 6b (strain ATCC 35897 / DSM 20650 / CCUG 15529 / CIP 8149 / NCTC 11857 / SLCC 5334 / V8).